We begin with the raw amino-acid sequence, 72 residues long: Bowman-Birk type proteinase inhibitor (72 aa).

7 cysteine pairs are disulfide-bonded: Cys8/Cys61, Cys9/Cys24, Cys12/Cys57, Cys14/Cys22, Cys31/Cys38, Cys35/Cys50, and Cys40/Cys48.

It belongs to the Bowman-Birk serine protease inhibitor family.

This inhibitor has two domains, each with separate antiprotease activity. 1 mole of inhibitor inhibits either 1 mole of trypsin or 2 moles of chymotrypsin, stoichiometrically. The polypeptide is Bowman-Birk type proteinase inhibitor (Vicia sativa subsp. nigra (Common vetch)).